A 274-amino-acid polypeptide reads, in one-letter code: Large ribosomal subunit protein uL2cz/uL2cy (274 aa).

Disordered regions lie at residues 1-22 (MAINLYKTSTPSTRNGTVDSQV) and 224-274 (NPVD…RRSK).

It belongs to the universal ribosomal protein uL2 family. As to quaternary structure, part of the 50S ribosomal subunit.

The protein resides in the plastid. It localises to the chloroplast. This Helianthus annuus (Common sunflower) protein is Large ribosomal subunit protein uL2cz/uL2cy (rpl2-A).